We begin with the raw amino-acid sequence, 216 residues long: Ribonuclease HII (216 aa).

One can recognise an RNase H type-2 domain in the interval 33–216 (WPVAGADEAG…RMSFRPFRQV (184 aa)). Positions 39, 40, and 130 each coordinate a divalent metal cation.

Belongs to the RNase HII family. Mn(2+) serves as cofactor. Mg(2+) is required as a cofactor.

Its subcellular location is the cytoplasm. It catalyses the reaction Endonucleolytic cleavage to 5'-phosphomonoester.. Functionally, endonuclease that specifically degrades the RNA of RNA-DNA hybrids. This chain is Ribonuclease HII, found in Rhizobium meliloti (strain 1021) (Ensifer meliloti).